Consider the following 509-residue polypeptide: Zinc finger CCCH-type with G patch domain-containing protein (509 aa).

The C3H1-type zinc finger occupies 155–178 (PCNYYLEGECRFDEIRCRYSHGAL). Positions 253–277 (EEDGLTSEDSSSSPHDESSDEIDSD) are disordered. One can recognise a G-patch domain in the interval 310–356 (TRGIGSKLMEKMGYIHGTGLGSEGRGIVTPVSAQILPQGRSLDACME). Residues 409 to 430 (GGESRHQGDQAAKKAKTNDLQQ) form a disordered region. Residues 411 to 420 (ESRHQGDQAA) are compositionally biased toward basic and acidic residues.

The protein localises to the nucleus. Transcription repressor. This chain is Zinc finger CCCH-type with G patch domain-containing protein, found in Drosophila persimilis (Fruit fly).